Here is a 331-residue protein sequence, read N- to C-terminus: Mucin-15 (331 aa).

The first 22 residues, 1 to 22 (MLTLAKIALISSLFISLPFARP), serve as a signal peptide directing secretion. At 23–233 (QKQNPRRNVT…SDTPKENKNT (211 aa)) the chain is on the extracellular side. N-linked (GlcNAc...) asparagine glycosylation is found at N30, N44, N54, N59, N75, N84, N120, N136, N145, N152, N215, and N222. The segment covering 124–162 (ADANPLQVSEHSNSTNSPSPENFTWSLDNDTMNSPEDIS) has biased composition (polar residues). The interval 124-186 (ADANPLQVSE…VTPFTAEPTE (63 aa)) is disordered. A helical membrane pass occupies residues 234–254 (GIVFGAILGAILGASLLSLVG). Residues 255–331 (YLLCGQRKTD…DAIPPLRPSI (77 aa)) are Cytoplasmic-facing. The interval 302–331 (AVSDSSMPEGGESLQDGIPMDAIPPLRPSI) is disordered.

Highly glycosylated (N- and O-linked carbohydrates).

The protein localises to the membrane. In Mus musculus (Mouse), this protein is Mucin-15 (Muc15).